The following is a 338-amino-acid chain: Fe-S cluster assembly protein DRE2 (338 aa).

Residues 1 to 165 form an N-terminal SAM-like domain region; it reads MAKSGLLLIH…LPSFKKAANK (165 aa). The tract at residues 166-232 is linker; sequence PLPTFKKKVE…DDLLNEEDAK (67 aa). The disordered stretch occupies residues 181-223; that stretch reads VEARVHKAENDDDELEDEEDENLFDASRSKYFDEDDSESLDED. Composition is skewed to acidic residues over residues 190-203 and 213-223; these read NDDD…DENL and DEDDSESLDED. 4 residues coordinate [2Fe-2S] cluster: C242, C253, C256, and C258. Residues 242 to 258 form a fe-S binding site A region; it reads CGKSKTKKKKACKDCSC. [4Fe-4S] cluster is bound by residues C301, C304, C312, and C315. Short sequence motifs (cx2C motif) lie at residues 301-304 and 312-315; these read CGSC and CTGC. A fe-S binding site B region spans residues 301-315; sequence CGSCSLGDAFRCTGC.

The protein belongs to the anamorsin family. Monomer. Interacts with TAH18. Interacts with MIA40. It depends on [2Fe-2S] cluster as a cofactor. [4Fe-4S] cluster is required as a cofactor.

The protein resides in the cytoplasm. The protein localises to the mitochondrion intermembrane space. Functionally, component of the cytosolic iron-sulfur (Fe-S) protein assembly (CIA) machinery required for the maturation of extramitochondrial Fe-S proteins. Part of an electron transfer chain functioning in an early step of cytosolic Fe-S biogenesis, facilitating the de novo assembly of a [4Fe-4S] cluster on the scaffold complex CFD1-NBP35. Electrons are transferred to DRE2 from NADPH via the FAD- and FMN-containing protein TAH18. TAH18-DRE2 are also required for the assembly of the diferric tyrosyl radical cofactor of ribonucleotide reductase (RNR), probably by providing electrons for reduction during radical cofactor maturation in the catalytic small subunit RNR2. The chain is Fe-S cluster assembly protein DRE2 from Candida glabrata (strain ATCC 2001 / BCRC 20586 / JCM 3761 / NBRC 0622 / NRRL Y-65 / CBS 138) (Yeast).